The chain runs to 264 residues: 3-deoxy-manno-octulosonate cytidylyltransferase (264 aa).

Belongs to the KdsB family.

It localises to the cytoplasm. It carries out the reaction 3-deoxy-alpha-D-manno-oct-2-ulosonate + CTP = CMP-3-deoxy-beta-D-manno-octulosonate + diphosphate. It functions in the pathway nucleotide-sugar biosynthesis; CMP-3-deoxy-D-manno-octulosonate biosynthesis; CMP-3-deoxy-D-manno-octulosonate from 3-deoxy-D-manno-octulosonate and CTP: step 1/1. The protein operates within bacterial outer membrane biogenesis; lipopolysaccharide biosynthesis. In terms of biological role, activates KDO (a required 8-carbon sugar) for incorporation into bacterial lipopolysaccharide in Gram-negative bacteria. This chain is 3-deoxy-manno-octulosonate cytidylyltransferase, found in Marinomonas sp. (strain MWYL1).